The chain runs to 116 residues: Somatostatin (116 aa).

Residues 1-24 (MLSCRLQCALALLSIALAVGTVSA) form the signal peptide. Residues 25–88 (APSDPRLRQF…QDEVRLELER (64 aa)) constitute a propeptide that is removed on maturation. Positions 60–82 (PSQTENEALESEDLSRGAEQDEV) are disordered. Residues 72–82 (DLSRGAEQDEV) show a composition bias toward basic and acidic residues. Cysteine 105 and cysteine 116 are joined by a disulfide.

This sequence belongs to the somatostatin family.

It localises to the secreted. Its function is as follows. Somatostatin inhibits the release of somatotropin. The chain is Somatostatin (SST) from Gallus gallus (Chicken).